Here is a 191-residue protein sequence, read N- to C-terminus: Transcriptional activator GvpE1 (191 aa).

Residues 31 to 51 (SDGASDHADQPPDEGATQRYT) form a disordered region. 140–145 (KRKVYR) serves as a coordination point for DNA. Residues 150 to 181 (EGAFTRIDHMVDQLLLFSLVLKAVMTDCKARQ) are leucine-zipper.

As to quaternary structure, interacts with GvpD.

Its subcellular location is the cytoplasm. With respect to regulation, the amount of protein that accumulates is controlled by GvpD; GvpD causes a reduction in the amount of GvpE, preventing accumulation of excessive amounts of gas vesicles. Plays a regulatory role in gas vesicle synthesis, activates transcription of the gvpA operon, and probably of the gvpD operon. Gas vesicles are hollow, gas filled proteinaceous nanostructures found in several microbial planktonic microorganisms. They allow positioning of halobacteria at the optimal depth for growth in the poorly aerated, shallow brine pools of their habitat. In terms of biological role, expression of a 9.5 kb p-vac DNA fragment containing 2 divergently transcribed regions (gvpD-gvpE-gvpF-gvpG-gvpH-gvpI-gvpJ-gvpK-gvpL-gvpM and gvpA-gvpC-gvpN-gvpO) allows H.volcanii to produce gas vesicles. A similar region restores gas vesicle production in H.halobium without the p-vac locus, but it still has the c-vac locus. The protein is Transcriptional activator GvpE1 (gvpE11) of Halobacterium salinarum (strain ATCC 700922 / JCM 11081 / NRC-1) (Halobacterium halobium).